A 1416-amino-acid chain; its full sequence is DNA-directed RNA polymerase subunit beta' (1416 aa).

Positions 60, 62, 75, and 78 each coordinate Zn(2+). Residues Asp-449, Asp-451, and Asp-453 each coordinate Mg(2+). Residues Cys-781, Cys-855, Cys-862, and Cys-865 each coordinate Zn(2+).

It belongs to the RNA polymerase beta' chain family. The RNAP catalytic core consists of 2 alpha, 1 beta, 1 beta' and 1 omega subunit. When a sigma factor is associated with the core the holoenzyme is formed, which can initiate transcription. The cofactor is Mg(2+). Zn(2+) serves as cofactor.

It carries out the reaction RNA(n) + a ribonucleoside 5'-triphosphate = RNA(n+1) + diphosphate. DNA-dependent RNA polymerase catalyzes the transcription of DNA into RNA using the four ribonucleoside triphosphates as substrates. In Treponema pallidum (strain Nichols), this protein is DNA-directed RNA polymerase subunit beta'.